We begin with the raw amino-acid sequence, 930 residues long: Beta-mannosidase A (930 aa).

A signal peptide spans 1-21; that stretch reads MHVKAETVLALLTPGLPSVVG. N-linked (GlcNAc...) asparagine glycans are attached at residues Asn62, Asn246, Asn281, Asn315, and Asn346. The Proton donor role is filled by Glu478. 11 N-linked (GlcNAc...) asparagine glycosylation sites follow: Asn536, Asn607, Asn630, Asn657, Asn737, Asn760, Asn782, Asn789, Asn797, Asn823, and Asn909.

It belongs to the glycosyl hydrolase 2 family. Beta-mannosidase A subfamily. Homodimer.

The protein resides in the secreted. The catalysed reaction is Hydrolysis of terminal, non-reducing beta-D-mannose residues in beta-D-mannosides.. It functions in the pathway glycan metabolism; N-glycan degradation. Exoglycosidase that cleaves the single beta-linked mannose residue from the non-reducing end of beta-mannosidic oligosaccharides of various complexity and length. Involved in the degradation of polymeric mannan and galactomannan. The sequence is that of Beta-mannosidase A (mndA) from Neosartorya fischeri (strain ATCC 1020 / DSM 3700 / CBS 544.65 / FGSC A1164 / JCM 1740 / NRRL 181 / WB 181) (Aspergillus fischerianus).